Consider the following 243-residue polypeptide: Ornithine decarboxylase antizyme 3 (243 aa).

3 positions are modified to phosphoserine: serine 6, serine 9, and serine 12.

The protein belongs to the ODC antizyme family. In terms of assembly, interacts with ODC1 and thereby sterically blocks ODC homodimerization. Interacts with AZIN2; this interaction disrupts the interaction between the antizyme and ODC1. Interacts with GGN. Testis specific. Expressed throughout the differentiation process from spermatids to spermatozoa in the inner part of the seminiferous tubules.

It is found in the nucleus. The protein resides in the cytoplasm. Its function is as follows. Ornithine decarboxylase (ODC) antizyme protein that negatively regulates ODC activity and intracellular polyamine biosynthesis and uptake in response to increased intracellular polyamine levels. Binds to ODC monomers, inhibiting the assembly of the functional ODC homodimers. Does not target the ODC monomers for degradation, which allows a protein synthesis-independent restoration of ODC activity. Stabilizes AZIN2 by interfering with its ubiquitination. Involved in the translocation of AZNI2 from ER-Golgi intermediate compartment (ERGIC) to the cytosol. Probably plays a key role in spermatogenesis by regulating the intracellular concentration of polyamines in haploid germ cells. This is Ornithine decarboxylase antizyme 3 (Oaz3) from Mus musculus (Mouse).